A 180-amino-acid polypeptide reads, in one-letter code: Crossover junction endodeoxyribonuclease RuvC (180 aa).

Active-site residues include aspartate 7, glutamate 66, and aspartate 138. Mg(2+) contacts are provided by aspartate 7, glutamate 66, and aspartate 138.

The protein belongs to the RuvC family. As to quaternary structure, homodimer which binds Holliday junction (HJ) DNA. The HJ becomes 2-fold symmetrical on binding to RuvC with unstacked arms; it has a different conformation from HJ DNA in complex with RuvA. In the full resolvosome a probable DNA-RuvA(4)-RuvB(12)-RuvC(2) complex forms which resolves the HJ. Mg(2+) serves as cofactor.

The protein localises to the cytoplasm. The enzyme catalyses Endonucleolytic cleavage at a junction such as a reciprocal single-stranded crossover between two homologous DNA duplexes (Holliday junction).. Functionally, the RuvA-RuvB-RuvC complex processes Holliday junction (HJ) DNA during genetic recombination and DNA repair. Endonuclease that resolves HJ intermediates. Cleaves cruciform DNA by making single-stranded nicks across the HJ at symmetrical positions within the homologous arms, yielding a 5'-phosphate and a 3'-hydroxyl group; requires a central core of homology in the junction. The consensus cleavage sequence is 5'-(A/T)TT(C/G)-3'. Cleavage occurs on the 3'-side of the TT dinucleotide at the point of strand exchange. HJ branch migration catalyzed by RuvA-RuvB allows RuvC to scan DNA until it finds its consensus sequence, where it cleaves and resolves the cruciform DNA. This is Crossover junction endodeoxyribonuclease RuvC from Burkholderia thailandensis (strain ATCC 700388 / DSM 13276 / CCUG 48851 / CIP 106301 / E264).